The following is a 319-amino-acid chain: Ribosomal RNA small subunit methyltransferase H (319 aa).

S-adenosyl-L-methionine contacts are provided by residues 37–39, aspartate 57, phenylalanine 96, aspartate 105, and glutamine 112; that span reads GGY. Residues 292–302 are compositionally biased toward basic and acidic residues; sequence RPDEREKERNP. The tract at residues 292–319 is disordered; the sequence is RPDEREKERNPRSRSARLRAVEKQGVPA.

This sequence belongs to the methyltransferase superfamily. RsmH family.

The protein localises to the cytoplasm. It carries out the reaction cytidine(1402) in 16S rRNA + S-adenosyl-L-methionine = N(4)-methylcytidine(1402) in 16S rRNA + S-adenosyl-L-homocysteine + H(+). Functionally, specifically methylates the N4 position of cytidine in position 1402 (C1402) of 16S rRNA. This is Ribosomal RNA small subunit methyltransferase H from Syntrophobacter fumaroxidans (strain DSM 10017 / MPOB).